Consider the following 193-residue polypeptide: ATP synthase subunit b 1 (193 aa).

A disordered region spans residues 13–32 (PAVTGGDTHSGTGVPAEAHG). A helical membrane pass occupies residues 40 to 60 (ATFPSQLLWLAITFGLFYLFL).

This sequence belongs to the ATPase B chain family. In terms of assembly, F-type ATPases have 2 components, F(1) - the catalytic core - and F(0) - the membrane proton channel. F(1) has five subunits: alpha(3), beta(3), gamma(1), delta(1), epsilon(1). F(0) has three main subunits: a(1), b(2) and c(10-14). The alpha and beta chains form an alternating ring which encloses part of the gamma chain. F(1) is attached to F(0) by a central stalk formed by the gamma and epsilon chains, while a peripheral stalk is formed by the delta and b chains.

The protein resides in the cell inner membrane. In terms of biological role, f(1)F(0) ATP synthase produces ATP from ADP in the presence of a proton or sodium gradient. F-type ATPases consist of two structural domains, F(1) containing the extramembraneous catalytic core and F(0) containing the membrane proton channel, linked together by a central stalk and a peripheral stalk. During catalysis, ATP synthesis in the catalytic domain of F(1) is coupled via a rotary mechanism of the central stalk subunits to proton translocation. Component of the F(0) channel, it forms part of the peripheral stalk, linking F(1) to F(0). The protein is ATP synthase subunit b 1 of Mesorhizobium japonicum (strain LMG 29417 / CECT 9101 / MAFF 303099) (Mesorhizobium loti (strain MAFF 303099)).